The chain runs to 410 residues: Putative odorant receptor 65c (410 aa).

Residues Met1–Ser59 are Cytoplasmic-facing. Residues Trp60 to Thr80 traverse the membrane as a helical segment. Topologically, residues Glu81–Asp92 are extracellular. A helical membrane pass occupies residues Ile93 to Gly113. The Cytoplasmic segment spans residues Asp114–Thr148. A helical membrane pass occupies residues Leu149 to Ile169. Residues Thr170–Glu222 are Extracellular-facing. Residues Gly223–Leu243 form a helical membrane-spanning segment. Residues Arg244–Lys279 lie on the Cytoplasmic side of the membrane. Residues Val280 to Val300 form a helical membrane-spanning segment. Over Leu301 to Val312 the chain is Extracellular. Residues Val313 to Phe333 form a helical membrane-spanning segment. Topologically, residues Gly334–Ser385 are cytoplasmic. Residues Phe386–Leu406 traverse the membrane as a helical segment. Residues Lys407–Asp410 are Extracellular-facing.

The protein belongs to the insect chemoreceptor superfamily. Heteromeric odorant receptor channel (TC 1.A.69) family. Or49a subfamily. As to quaternary structure, interacts with Orco. Complexes exist early in the endomembrane system in olfactory sensory neurons (OSNs), coupling these complexes to the conserved ciliary trafficking pathway.

The protein localises to the cell membrane. Its function is as follows. Odorant receptor which mediates acceptance or avoidance behavior, depending on its substrates. The odorant receptor repertoire encodes a large collection of odor stimuli that vary widely in identity, intensity, and duration. May form a complex with Orco to form odorant-sensing units, providing sensitive and prolonged odorant signaling and calcium permeability. In Drosophila melanogaster (Fruit fly), this protein is Putative odorant receptor 65c (Or65c).